The sequence spans 427 residues: Glutamate-1-semialdehyde 2,1-aminomutase (427 aa).

At lysine 265 the chain carries N6-(pyridoxal phosphate)lysine.

This sequence belongs to the class-III pyridoxal-phosphate-dependent aminotransferase family. HemL subfamily. In terms of assembly, homodimer. The cofactor is pyridoxal 5'-phosphate.

It localises to the cytoplasm. The catalysed reaction is (S)-4-amino-5-oxopentanoate = 5-aminolevulinate. It participates in porphyrin-containing compound metabolism; protoporphyrin-IX biosynthesis; 5-aminolevulinate from L-glutamyl-tRNA(Glu): step 2/2. The polypeptide is Glutamate-1-semialdehyde 2,1-aminomutase (Pseudomonas paraeruginosa (strain DSM 24068 / PA7) (Pseudomonas aeruginosa (strain PA7))).